Consider the following 397-residue polypeptide: 3-hydroxy-3-methylglutaryl-coenzyme A reductase (397 aa).

Active-site charge relay system residues include E96 and D301. Catalysis depends on H391, which acts as the Proton donor.

It belongs to the HMG-CoA reductase family.

It carries out the reaction (R)-mevalonate + 2 NADP(+) + CoA = (3S)-3-hydroxy-3-methylglutaryl-CoA + 2 NADPH + 2 H(+). It functions in the pathway metabolic intermediate biosynthesis; (R)-mevalonate biosynthesis; (R)-mevalonate from acetyl-CoA: step 3/3. Functionally, converts HMG-CoA to mevalonate. The protein is 3-hydroxy-3-methylglutaryl-coenzyme A reductase (hmgA) of Methanothermobacter thermautotrophicus (strain ATCC 29096 / DSM 1053 / JCM 10044 / NBRC 100330 / Delta H) (Methanobacterium thermoautotrophicum).